A 215-amino-acid polypeptide reads, in one-letter code: Cytochrome b6 (215 aa).

A helical transmembrane segment spans residues 32–52 (IFYCLGGITLTCFLVQVATGF). Cys35 lines the heme c pocket. The heme b site is built by His86 and His100. The next 3 helical transmembrane spans lie at 90–110 (ASMM…TGGF), 116–136 (LTWV…VTGY), and 186–206 (LHTF…FLMI). Heme b contacts are provided by His187 and His202.

The protein belongs to the cytochrome b family. PetB subfamily. As to quaternary structure, the 4 large subunits of the cytochrome b6-f complex are cytochrome b6, subunit IV (17 kDa polypeptide, PetD), cytochrome f and the Rieske protein, while the 4 small subunits are PetG, PetL, PetM and PetN. The complex functions as a dimer. It depends on heme b as a cofactor. Requires heme c as cofactor.

It is found in the plastid. The protein resides in the chloroplast thylakoid membrane. Its function is as follows. Component of the cytochrome b6-f complex, which mediates electron transfer between photosystem II (PSII) and photosystem I (PSI), cyclic electron flow around PSI, and state transitions. The polypeptide is Cytochrome b6 (Huperzia lucidula (Shining clubmoss)).